Consider the following 798-residue polypeptide: ABC transporter G family member 4 (798 aa).

The disordered stretch occupies residues 1-51 (MEDIGNNNFEIIDDKSDEKNDENFEDKNSRNNINEEQILSNQQQQQQQQQQ). The segment covering 12–29 (IDDKSDEKNDENFEDKNS) has biased composition (basic and acidic residues). Positions 30–41 (RNNINEEQILSN) are enriched in polar residues. Residues 34 to 83 (NEEQILSNQQQQQQQQQQQQQQQQQQQQQQQQQQQQQQEQQQFKNEVINT) adopt a coiled-coil conformation. A compositionally biased stretch (low complexity) spans 42 to 51 (QQQQQQQQQQ). The ABC transporter domain maps to 211–464 (IDIEDIESQV…SIDSNYKCPP (254 aa)). Position 253–260 (253–260 (GPSGSGKS)) interacts with ATP. 7 helical membrane-spanning segments follow: residues 540 to 560 (VVFFSKIVIAILIGLLFSACF), 579 to 599 (LFFFIITSLNLLPYSSISTFV), 628 to 648 (IVSSFFVVLIITTIIYCIVHL), 656 to 676 (ILSLISFYMVFLASVFMVIAM), 687 to 707 (FSYCTGVSVVLVLFSGFLVPI), 713 to 733 (SFGWIHHIDYLFYGFSSIVII), and 771 to 791 (SIGILTIWIAFFYILAYIGLY). The 254-residue stretch at 540 to 793 (VVFFSKIVIA…ILAYIGLYKF (254 aa)) folds into the ABC transmembrane type-2 domain.

The protein belongs to the ABC transporter superfamily. ABCG family. Eye pigment precursor importer (TC 3.A.1.204) subfamily.

The protein resides in the membrane. This chain is ABC transporter G family member 4 (abcG4), found in Dictyostelium discoideum (Social amoeba).